The chain runs to 662 residues: Acyl-coenzyme A oxidase acox-1.4 (662 aa).

FAD is bound by residues 148–151 (YAQT), 156–157 (GT), and Gly190. Substrate contacts are provided by residues 284-287 (KVNH) and Arg294. FAD contacts are provided by residues Arg319 and 339–342 (QQHR). 4 residues coordinate ATP: His341, Ser391, His395, and Gln403. Gly410 serves as a coordination point for FAD. 432–433 (YE) lines the substrate pocket. Catalysis depends on Glu433, which acts as the Proton acceptor. Glu435 is an FAD binding site. Residues 526–529 (RASR) and Tyr574 each bind ATP. The short motif at 660 to 662 (AKL) is the Microbody targeting signal element.

This sequence belongs to the acyl-CoA oxidase family. In terms of assembly, homodimer. FAD serves as cofactor.

Its subcellular location is the peroxisome. The enzyme catalyses asc-C9-CoA + O2 = asc-DeltaC9-CoA + H2O2. It participates in lipid metabolism; peroxisomal fatty acid beta-oxidation. Activated by ATP. ATP binding leads to a conformational change that promotes FAD cofactor binding and enzyme activity. ATP binding likely occurs during acox-1.4 folding and/or dimer formation. In terms of biological role, involved in the first step of peroxisomal beta-oxidation by catalyzing the desaturation of fatty acid-derived side chains of ascaroside pheromones, which regulates development and behavior. Specifically, shortens ascarosides with a 9-carbon side chain (asc-C9) and, in association with acox-1.1, may contribute to the shortening of ascarosides with a 11-carbon side chain (asc-C11). May contribute to the production of indol-3-carbonyl(IC)-ascarosides in association with acox-1.1 and acox-3. In Caenorhabditis elegans, this protein is Acyl-coenzyme A oxidase acox-1.4.